Consider the following 354-residue polypeptide: Cysteine proteinase 1 (354 aa).

A signal peptide spans 1–24 (MARRNPLLFAIVVTILFVVCYGSA). The propeptide at 25–125 (LIAQTPPPVD…HKEDVHVDDS (101 aa)) is activation peptide. Intrachain disulfides connect Cys150/Cys191, Cys184/Cys229, and Cys282/Cys330. Cys153 is an active-site residue. Asn208 carries an N-linked (GlcNAc...) asparagine glycan. Residues His289 and Asn309 contribute to the active site.

Belongs to the peptidase C1 family.

Functionally, the cysteine proteinases have a potential role in host-parasite interaction and virulence. The sequence is that of Cysteine proteinase 1 (CYS1) from Leishmania pifanoi.